A 396-amino-acid chain; its full sequence is Period circadian protein (396 aa).

Disordered stretches follow at residues 27 to 120 (VTAP…APPV), 167 to 188 (SGPG…WEGE), 253 to 275 (GGNG…QYTQ), and 333 to 362 (SPSS…TSQA). Over residues 93-114 (GTSGTGNSGDGGGGGGANGTGS) the composition is skewed to gly residues. The segment covering 253-262 (GGNGNVGSGN) has biased composition (gly residues). The span at 333–342 (SPSSTNTNPN) shows a compositional bias: low complexity.

Forms a heterodimer with timeless (TIM); the complex then translocates into the nucleus. In terms of processing, phosphorylated with a circadian rhythmicity, probably by the double-time protein (dbt). Phosphorylation could be implicated in the stability of per monomer and in the formation of heterodimer per-tim.

It localises to the nucleus. Its subcellular location is the cytoplasm. It is found in the perinuclear region. Its function is as follows. Essential for biological clock functions. Determines the period length of circadian and ultradian rhythms; an increase in PER dosage leads to shortened circadian rhythms and a decrease leads to lengthened circadian rhythms. Essential for the circadian rhythmicity of locomotor activity, eclosion behavior, and for the rhythmic component of the male courtship song that originates in the thoracic nervous system. The biological cycle depends on the rhythmic formation and nuclear localization of the TIM-PER complex. Light induces the degradation of TIM, which promotes elimination of PER. Nuclear activity of the heterodimer coordinatively regulates PER and TIM transcription through a negative feedback loop. Behaves as a negative element in circadian transcriptional loop. Does not appear to bind DNA, suggesting indirect transcriptional inhibition. This is Period circadian protein (per) from Drosophila paulistorum (Fruit fly).